The chain runs to 485 residues: Adenosylhomocysteinase (485 aa).

Substrate-binding residues include threonine 64, aspartate 139, and glutamate 205. Residue 206–208 participates in NAD(+) binding; that stretch reads TTT. Lysine 235 and aspartate 239 together coordinate substrate. Residues asparagine 240, 269–274, glutamate 292, asparagine 327, 348–350, and asparagine 397 each bind NAD(+); these read GYGDVG and IGH.

It belongs to the adenosylhomocysteinase family. It depends on NAD(+) as a cofactor.

It carries out the reaction S-adenosyl-L-homocysteine + H2O = L-homocysteine + adenosine. Its pathway is amino-acid biosynthesis; L-homocysteine biosynthesis; L-homocysteine from S-adenosyl-L-homocysteine: step 1/1. Adenosylhomocysteine is a competitive inhibitor of S-adenosyl-L-methionine-dependent methyl transferase reactions; therefore adenosylhomocysteinase may play a key role in the control of methylations via regulation of the intracellular concentration of adenosylhomocysteine. This chain is Adenosylhomocysteinase (SAHH), found in Solanum lycopersicum (Tomato).